A 371-amino-acid polypeptide reads, in one-letter code: MKILCEKEAFLKEISTAQEVISNKKNTSIFSNVLLAAQGALLTIRATDTKVTFETSIPVNVLAEGTTTVFCDKLVNVVSALPTKEIELTLCEEQLVITPPNKKISFQLRTLSHESFPCFPQNEGGVSLAVPTSDLRNMINHTVFAVSEDSTRHFINGVHVDFQYGNIICVSTDGKRLAYIEKKGESSPQSFSGVIVPTKILGIVNRKLTPEGSVTLCITSQHVYFFFGGYKFSSVLIEGQFPNYKRVIPDHQERSFCVGRVELMEALKRVSLLVEQKSHRIFITIQQGLLTLSSKAHTQENEIGDAQEEIACAYTGESEVIALNYLYLEEPLKVFTSKEVQVEFTDPAKALTLRAVPNTDCFHIIMPMQTE.

Belongs to the beta sliding clamp family. In terms of assembly, forms a ring-shaped head-to-tail homodimer around DNA which binds and tethers DNA polymerases and other proteins to the DNA. The DNA replisome complex has a single clamp-loading complex (3 tau and 1 each of delta, delta', psi and chi subunits) which binds 3 Pol III cores (1 core on the leading strand and 2 on the lagging strand) each with a beta sliding clamp dimer. Additional proteins in the replisome are other copies of gamma, psi and chi, Ssb, DNA helicase and RNA primase.

Its subcellular location is the cytoplasm. Functionally, confers DNA tethering and processivity to DNA polymerases and other proteins. Acts as a clamp, forming a ring around DNA (a reaction catalyzed by the clamp-loading complex) which diffuses in an ATP-independent manner freely and bidirectionally along dsDNA. Initially characterized for its ability to contact the catalytic subunit of DNA polymerase III (Pol III), a complex, multichain enzyme responsible for most of the replicative synthesis in bacteria; Pol III exhibits 3'-5' exonuclease proofreading activity. The beta chain is required for initiation of replication as well as for processivity of DNA replication. The sequence is that of Beta sliding clamp (dnaN) from Treponema pallidum (strain Nichols).